The primary structure comprises 953 residues: Nucleotide-binding oligomerization domain-containing protein 1 (953 aa).

One can recognise a CARD domain in the interval 15 to 105; that stretch reads ESHPHIQLLK…AYVDLRPWLL (91 aa). Residues 196–531 enclose the NACHT domain; the sequence is ETIFILGDAG…AFFTAFFLVL (336 aa). 202-209 contacts ATP; that stretch reads GDAGVGKS. 2 S-palmitoyl cysteine lipidation sites follow: C558 and C567. 9 LRR repeats span residues 632-656, 702-725, 727-750, 755-778, 783-806, 839-862, 867-891, 895-918, and 923-946; these read LKSL…IWML, FPKR…ELQP, FSRL…VLSE, YKIV…YVTK, CKGL…YLAL, HPSL…SLAR, NTSL…LAEM, NQTL…QLAD, and NTGI…VYED. The S-palmitoyl cysteine moiety is linked to residue C952.

Belongs to the NOD1-NOD2 family. As to quaternary structure, homooligomer: homooligomerizes following ligand-binding, promoting RIPK2 recruitment. Interacts (via CARD domain) with RIPK2 (via CARD domain). Following RIPK2 recruitment, RIPK2 homooligomerizes via its CARD domain and forms long filaments named RIPosomes. Interacts with ARHGEF2. Interacts (via CARD domain) with ubiquitin; inhibiting interaction with RIPK2. Interacts with NLRP10 and recruits it to the cell membrane following invasive bacterial infection. Interacts with IFIH1; this interaction promotes transcription of antiviral genes and inhibition of viral replication. Interacts with IRGM; promoting NOD1 degradation. Interacts with ATG16L1. In terms of processing, palmitoylated. Palmitoylation is required for proper recruitment to the bacterial entry site and hence for proper signaling upon cognate peptidoglycan detection. Ubiquitinated. 'Lys-48'-linked polyubiquitination by RNF34 promotes proteasomal degradation and thereby negatively regulates NOD1 for instance in NF-kappa-B activation. Post-translationally, degraded via selective autophagy following interaction with IRGM. IRGM promotes NOD1-RIPK2 RIPosome recruitment to autophagosome membranes, promoting their SQSTM1/p62-dependent autophagic degradation. Highly expressed in adult heart, skeletal muscle, pancreas, spleen and ovary. Also detected in placenta, lung, liver, kidney, thymus, testis, small intestine and colon.

It localises to the cell membrane. Its subcellular location is the apical cell membrane. It is found in the basolateral cell membrane. The protein resides in the cytoplasm. In terms of biological role, pattern recognition receptor (PRR) that detects bacterial peptidoglycan fragments and other danger signals and thus participates in both innate and adaptive immune responses. Specifically recognizes and binds gamma-D-glutamyl-meso-diaminopimelic acid (iE-DAP), a dipeptide present in peptidoglycan of Gram-negative bacteria. Preferentially binds iE-DAP in tripeptide-containing muropeptides (MurNAc-TriDAP or TriDAP). Ligand binding triggers oligomerization that facilitates the binding and subsequent activation of the proximal adapter receptor-interacting RIPK2. Following recruitment, RIPK2 undergoes 'Met-1'- (linear) and 'Lys-63'-linked polyubiquitination by E3 ubiquitin-protein ligases XIAP, BIRC2, BIRC3 and the LUBAC complex, becoming a scaffolding protein for downstream effectors, triggering activation of the NF-kappa-B and MAP kinases signaling. This in turn leads to the transcriptional activation of hundreds of genes involved in immune response. Also acts as a regulator of antiviral response elicited by dsRNA and the expression of RLR pathway members by targeting IFIH1 and TRAF3 to modulate the formation of IFIH1-MAVS and TRAF3-MAVS complexes leading to increased transcription of type I IFNs. Also acts as a regulator of autophagy via its interaction with ATG16L1, possibly by recruiting ATG16L1 at the site of bacterial entry. Besides recognizing pathogens, also involved in the endoplasmic reticulum stress response: acts by sensing and binding to the cytosolic metabolite sphingosine-1-phosphate generated in response to endoplasmic reticulum stress, initiating an inflammation process that leads to activation of the NF-kappa-B and MAP kinases signaling. In addition, plays a role in insulin trafficking in beta cells in a cell-autonomous manner. Mechanistically, upon recognizing cognate ligands, NOD1 and RIPK2 localize to insulin vesicles where they recruit RAB1A to direct insulin trafficking through the cytoplasm. Functionally, in contrast to isoform 1, does not efficiently recognize and bind gamma-D-glutamyl-meso-diaminopimelic acid (iE-DAP) ligand. In Homo sapiens (Human), this protein is Nucleotide-binding oligomerization domain-containing protein 1.